The sequence spans 512 residues: 2,3-bisphosphoglycerate-independent phosphoglycerate mutase (512 aa).

Asp12 and Ser62 together coordinate Mn(2+). Residue Ser62 is the Phosphoserine intermediate of the active site. Substrate contacts are provided by residues His123, 153-154 (RD), Arg185, Arg191, 260-263 (RPDR), and Lys333. Mn(2+)-binding residues include Asp400, His404, Asp441, His442, and His460.

It belongs to the BPG-independent phosphoglycerate mutase family. Monomer. Mn(2+) serves as cofactor.

The enzyme catalyses (2R)-2-phosphoglycerate = (2R)-3-phosphoglycerate. The protein operates within carbohydrate degradation; glycolysis; pyruvate from D-glyceraldehyde 3-phosphate: step 3/5. Functionally, catalyzes the interconversion of 2-phosphoglycerate and 3-phosphoglycerate. This is 2,3-bisphosphoglycerate-independent phosphoglycerate mutase from Clostridium beijerinckii (strain ATCC 51743 / NCIMB 8052) (Clostridium acetobutylicum).